The primary structure comprises 1375 residues: uncharacterized protein (1375 aa).

Residues 277–476 (LLASGDIRGG…FGLLFLLRYS (200 aa)) form the Helicase ATP-binding domain. Residue 290–297 (DEMGMGKT) participates in ATP binding. The segment at 1092–1130 (CIICRDIIKQGFITTCGHLYCSFCLEAWLKHSSSCPMCK) adopts an RING-type zinc-finger fold. The Helicase C-terminal domain occupies 1190 to 1336 (TISKHLLYLK…QLDKLGLDVP (147 aa)).

The protein belongs to the SNF2/RAD54 helicase family.

Its subcellular location is the nucleus. This is an uncharacterized protein from Schizosaccharomyces pombe (strain 972 / ATCC 24843) (Fission yeast).